A 499-amino-acid chain; its full sequence is Sensor histidine kinase VxrA (499 aa).

Topologically, residues 1–12 (MRYSFCMLEKTN) are cytoplasmic. A helical membrane pass occupies residues 13-31 (IPLIRALNLTLVSLCFAML). Residues 32-257 (PNPVHADSLP…ICWDVEDHSD (226 aa)) are Periplasmic-facing. Intrachain disulfides connect Cys101-Cys122 and Cys241-Cys249. Residues 258–280 (LLRTSMIILVIANIFLVLGWSGY) traverse the membrane as a helical segment. The Cytoplasmic segment spans residues 281 to 499 (RWNSKRQEMR…IPCETDTASR (219 aa)). Residues 298–494 (ILTHELRTPI…TFILEIPCET (197 aa)) enclose the Histidine kinase domain. Position 301 is a phosphohistidine; by autocatalysis (His301).

As to quaternary structure, homodimer. In terms of processing, autophosphorylated. Contains two disulfide bonds that may play a role in the stability of the protein. However, the disulfide bonds are not absolutely essential, as some activity and growth are detected in the absence of each disulfide bond.

It localises to the cell inner membrane. It catalyses the reaction ATP + protein L-histidine = ADP + protein N-phospho-L-histidine.. Functionally, member of the two-component regulatory system VxrB/VxrA involved in the regulation of diverses processes, including virulence, the type VI secretion system (T6SS) and biofilm formation. Functions as a sensor protein kinase which is autophosphorylated at a histidine residue and transfers its phosphate group to the conserved aspartic acid residue in the regulatory domain of VxrB. Is critical for colonization in the infant mouse model. Contributes to the resistance to beta-lactam treatment. The protein is Sensor histidine kinase VxrA of Vibrio cholerae serotype O1 (strain ATCC 39315 / El Tor Inaba N16961).